The sequence spans 343 residues: L-threonine 3-dehydrogenase (343 aa).

C40 is a Zn(2+) binding site. Active-site charge relay system residues include T42 and H45. The Zn(2+) site is built by H65, E66, C95, C98, C101, and C109. NAD(+)-binding positions include I177, D197, R202, 264–266 (LGI), and 288–289 (IY).

The protein belongs to the zinc-containing alcohol dehydrogenase family. In terms of assembly, homotetramer. Requires Zn(2+) as cofactor.

It is found in the cytoplasm. It carries out the reaction L-threonine + NAD(+) = (2S)-2-amino-3-oxobutanoate + NADH + H(+). Its pathway is amino-acid degradation; L-threonine degradation via oxydo-reductase pathway; glycine from L-threonine: step 1/2. Functionally, catalyzes the NAD(+)-dependent oxidation of L-threonine to 2-amino-3-ketobutyrate. The protein is L-threonine 3-dehydrogenase of Vibrio vulnificus (strain CMCP6).